The following is a 303-amino-acid chain: THAP domain-containing protein 11 (303 aa).

The THAP-type zinc-finger motif lies at 6 to 64 (CCVPGCYNNSHRDKALHFYTFPKDAELRRLWLKNVSRAGVSGCFSTFQPTTGHRLCSVH). Disordered stretches follow at residues 85-132 (VNER…AQTT) and 155-174 (SSQA…GEDV). The span at 93–132 (RPAGAAAARRRQQQQQQQQQQQQQQQQQQPSPSASTAQTT) shows a compositional bias: low complexity. The short motif at 232-235 (DHSY) is the HCFC1-binding motif (HBM) element. Residues 244-294 (EELLRKLNEQRDILALMEVKMKEMKGSIRHLRLTEAKLREELREKDRLLAM) adopt a coiled-coil conformation.

It belongs to the THAP11 family. In terms of assembly, forms homodimers. Interacts via HBM with HCFC1. Forms a complex with HCFC1 and ZNF143.

It is found in the nucleus. The protein resides in the cytoplasm. Transcription factor, which has both transcriptional activation and repression activities. Also modulates chromatin accessibility. In complex with HCFC1 and ZNF143, regulates the expression of several genes, including AP2S1, ESCO2, OPHN1, RBL1, UBXN8 and ZNF32. May regulate the expression of genes that encode both cytoplasmic and mitochondrial ribosomal proteins. Required for normal mitochondrial development and function. Regulates mitochondrial gene expression, including that of components of the electron transport chain. Involved in the maintainance of pluripotency in early embryonic cells, possibly through its action on mitochondrial maturation which is required to meet high energy demands of these cells. Required for early development of retina, preventing premature exit of retinal progenitor cells from the cell cycle. This effect may also be mediated by its action on mitochondria. Through the regulation of MMACHC gene expression, controls cobalamin metabolism. Required for normal brain development and neural precursor differentiation. Involved in cell growth. In Bos taurus (Bovine), this protein is THAP domain-containing protein 11 (THAP11).